The chain runs to 298 residues: Probable porphobilinogen deaminase (298 aa).

At C241 the chain carries S-(dipyrrolylmethanemethyl)cysteine.

This sequence belongs to the HMBS family. It depends on dipyrromethane as a cofactor.

It carries out the reaction 4 porphobilinogen + H2O = hydroxymethylbilane + 4 NH4(+). It participates in porphyrin-containing compound metabolism; protoporphyrin-IX biosynthesis; coproporphyrinogen-III from 5-aminolevulinate: step 2/4. Tetrapolymerization of the monopyrrole PBG into the hydroxymethylbilane pre-uroporphyrinogen in several discrete steps. The polypeptide is Probable porphobilinogen deaminase (Methanopyrus kandleri (strain AV19 / DSM 6324 / JCM 9639 / NBRC 100938)).